The sequence spans 452 residues: MTLPIVAIIGRPNVGKSTLVNRLAGDQQAIVHDEPGITRDRTYRPAFWQDRDFQVVDTGGLVFDDDTEFLPLIREQAMTALAEAHAAIFVVDGQTGPTPADEEIANWLRSQSVPIILAVNKCESVEQGLIQASEFWQLGLGEPYPISSIHGSGTGELLDKLIIYLPTTESLSETNEIKVAIVGRPNVGKSSLLNALTGENRAIVSPISGTTRDAIDMVVQRNEQQYRLIDTAGIRRKKNVEYGAEFFSINRAFKAIRRADVVLFVIDALDGITDQDLKLAGRISDEGRATVLVINKWDAVDKDSYTIYEYQKMLESRLYFMDWAEMIFVSALTGKRVEKILDLVDNATASHRRRVSTAVINEVLQEATTWHSPPTTRQGKQGKIYYGTQIKSEPPTITLFVNDPKRFNDNYRRYIERQFRQQLGFTGTPIRLIWRGKSTREVERTTNRATRV.

EngA-type G domains follow at residues 4 to 169 (PIVA…PTTE) and 177 to 352 (IKVA…ASHR). GTP contacts are provided by residues 10–17 (GRPNVGKS), 57–61 (DTGGL), 120–123 (NKCE), 183–190 (GRPNVGKS), 230–234 (DTAGI), and 295–298 (NKWD). One can recognise a KH-like domain in the interval 353–438 (RRVSTAVINE…PIRLIWRGKS (86 aa)).

The protein belongs to the TRAFAC class TrmE-Era-EngA-EngB-Septin-like GTPase superfamily. EngA (Der) GTPase family. As to quaternary structure, associates with the 50S ribosomal subunit.

Its function is as follows. GTPase that plays an essential role in the late steps of ribosome biogenesis. In Gloeothece citriformis (strain PCC 7424) (Cyanothece sp. (strain PCC 7424)), this protein is GTPase Der.